Reading from the N-terminus, the 40-residue chain is Photosystem II reaction center protein X (40 aa).

A helical membrane pass occupies residues 10-30 (FFYSILFGAIVLGLLGGGFIF).

Belongs to the PsbX family. Type 1 subfamily. As to quaternary structure, PSII is composed of 1 copy each of membrane proteins PsbA, PsbB, PsbC, PsbD, PsbE, PsbF, PsbH, PsbI, PsbJ, PsbK, PsbL, PsbM, PsbT, PsbX, PsbY, PsbZ, Psb30/Ycf12, peripheral proteins PsbO, CyanoQ (PsbQ), PsbU, PsbV and a large number of cofactors. It forms dimeric complexes.

It is found in the cellular thylakoid membrane. Involved in the binding and/or turnover of quinones at the Q(B) site of photosystem II (PSII). PSII is a light-driven water plastoquinone oxidoreductase, using light energy to abstract electrons from H(2)O, generating a proton gradient subsequently used for ATP formation. The polypeptide is Photosystem II reaction center protein X (Acaryochloris marina (strain MBIC 11017)).